An 85-amino-acid polypeptide reads, in one-letter code: DNA-directed RNA polymerase subunit omega (85 aa).

Belongs to the RNA polymerase subunit omega family. The RNAP catalytic core consists of 2 alpha, 1 beta, 1 beta' and 1 omega subunit. When a sigma factor is associated with the core the holoenzyme is formed, which can initiate transcription.

It catalyses the reaction RNA(n) + a ribonucleoside 5'-triphosphate = RNA(n+1) + diphosphate. Promotes RNA polymerase assembly. Latches the N- and C-terminal regions of the beta' subunit thereby facilitating its interaction with the beta and alpha subunits. The polypeptide is DNA-directed RNA polymerase subunit omega (Tropheryma whipplei (strain TW08/27) (Whipple's bacillus)).